We begin with the raw amino-acid sequence, 107 residues long: U1-lycotoxin-Ls1t (107 aa).

The N-terminal stretch at Met1 to Ser20 is a signal peptide. Residues Glu21–Arg41 constitute a propeptide that is removed on maturation. Disulfide bonds link Cys44–Cys59, Cys51–Cys68, Cys58–Cys86, and Cys70–Cys84.

Belongs to the neurotoxin 19 (CSTX) family. 04 (U1-Lctx) subfamily. Expressed by the venom gland.

It localises to the secreted. The protein is U1-lycotoxin-Ls1t of Lycosa singoriensis (Wolf spider).